The following is a 252-amino-acid chain: N-acetylglucosaminyl-phosphatidylinositol de-N-acetylase (252 aa).

Residues 2–22 (ELVGFLCVAVAVLTWGFLRVW) traverse the membrane as a helical segment. Residues 23–252 (NSAERMRSPE…YMRINSLRFL (230 aa)) are Cytoplasmic-facing.

The protein belongs to the PIGL family.

It localises to the endoplasmic reticulum membrane. The catalysed reaction is a 6-(N-acetyl-alpha-D-glucosaminyl)-1-(1,2-diacyl-sn-glycero-3-phospho)-1D-myo-inositol + H2O = a 6-(alpha-D-glucosaminyl)-1-(1,2-diacyl-sn-glycero-3-phospho)-1D-myo-inositol + acetate. It functions in the pathway glycolipid biosynthesis; glycosylphosphatidylinositol-anchor biosynthesis. Functionally, catalyzes the second step of glycosylphosphatidylinositol (GPI) biosynthesis, which is the de-N-acetylation of N-acetylglucosaminyl-phosphatidylinositol. The chain is N-acetylglucosaminyl-phosphatidylinositol de-N-acetylase (Pigl) from Mus musculus (Mouse).